Reading from the N-terminus, the 313-residue chain is Adhesin MafA 1/2 (313 aa).

An N-terminal signal peptide occupies residues 1 to 14 (MKTLLLLIPLVLTA). A lipid anchor (N-palmitoyl cysteine) is attached at Cys15. Residue Cys15 is the site of S-diacylglycerol cysteine attachment. The span at 282-298 (GDTTAQNRPDFKQNNGK) shows a compositional bias: polar residues. Positions 282–313 (GDTTAQNRPDFKQNNGKNPDVGNEVIRRRKGG) are disordered.

This sequence belongs to the MafA family.

The protein resides in the cell outer membrane. This Neisseria meningitidis serogroup C (strain 053442) protein is Adhesin MafA 1/2 (mafA1).